A 61-amino-acid chain; its full sequence is Translational regulator CsrA (61 aa).

The protein belongs to the CsrA/RsmA family. In terms of assembly, homodimer; the beta-strands of each monomer intercalate to form a hydrophobic core, while the alpha-helices form wings that extend away from the core.

It localises to the cytoplasm. A key translational regulator that binds mRNA to regulate translation initiation and/or mRNA stability. Mediates global changes in gene expression, shifting from rapid growth to stress survival by linking envelope stress, the stringent response and the catabolite repression systems. Usually binds in the 5'-UTR; binding at or near the Shine-Dalgarno sequence prevents ribosome-binding, repressing translation, binding elsewhere in the 5'-UTR can activate translation and/or stabilize the mRNA. Its function is antagonized by small RNA(s). The protein is Translational regulator CsrA of Actinobacillus succinogenes (strain ATCC 55618 / DSM 22257 / CCUG 43843 / 130Z).